The following is a 239-amino-acid chain: Small ribosomal subunit protein uS3c (239 aa).

The KH type-2 domain occupies 43–139 (IKNYIQKNRK…RFNISIEKVK (97 aa)). The interval 50–74 (NRKKGSNRKIESDSSSEVITHNRKM) is disordered.

The protein belongs to the universal ribosomal protein uS3 family. As to quaternary structure, part of the 30S ribosomal subunit.

Its subcellular location is the plastid. The protein localises to the chloroplast. The chain is Small ribosomal subunit protein uS3c (rps3) from Hordeum vulgare (Barley).